The following is a 261-amino-acid chain: 1-(5-phosphoribosyl)-5-[(5-phosphoribosylamino)methylideneamino] imidazole-4-carboxamide isomerase (261 aa).

The protein belongs to the HisA/HisF family.

It localises to the cytoplasm. The catalysed reaction is 1-(5-phospho-beta-D-ribosyl)-5-[(5-phospho-beta-D-ribosylamino)methylideneamino]imidazole-4-carboxamide = 5-[(5-phospho-1-deoxy-D-ribulos-1-ylimino)methylamino]-1-(5-phospho-beta-D-ribosyl)imidazole-4-carboxamide. It functions in the pathway amino-acid biosynthesis; L-histidine biosynthesis; L-histidine from 5-phospho-alpha-D-ribose 1-diphosphate: step 4/9. Catalyzes the isomerization of the aminoaldose moiety of ProFAR to the aminoketose of PRFAR. In Saccharomyces cerevisiae (strain ATCC 204508 / S288c) (Baker's yeast), this protein is 1-(5-phosphoribosyl)-5-[(5-phosphoribosylamino)methylideneamino] imidazole-4-carboxamide isomerase.